Here is a 391-residue protein sequence, read N- to C-terminus: 1-deoxy-D-xylulose 5-phosphate reductoisomerase (391 aa).

Residues threonine 11, glycine 12, serine 13, isoleucine 14, and asparagine 126 each coordinate NADPH. Lysine 127 contacts 1-deoxy-D-xylulose 5-phosphate. Glutamate 128 serves as a coordination point for NADPH. Residue aspartate 152 participates in Mn(2+) binding. 1-deoxy-D-xylulose 5-phosphate is bound by residues serine 153, glutamate 154, serine 176, and histidine 199. Glutamate 154 lines the Mn(2+) pocket. Glycine 205 contacts NADPH. The 1-deoxy-D-xylulose 5-phosphate site is built by serine 212, asparagine 217, lysine 218, and glutamate 221. Residue glutamate 221 participates in Mn(2+) binding.

This sequence belongs to the DXR family. Requires Mg(2+) as cofactor. Mn(2+) serves as cofactor.

The catalysed reaction is 2-C-methyl-D-erythritol 4-phosphate + NADP(+) = 1-deoxy-D-xylulose 5-phosphate + NADPH + H(+). Its pathway is isoprenoid biosynthesis; isopentenyl diphosphate biosynthesis via DXP pathway; isopentenyl diphosphate from 1-deoxy-D-xylulose 5-phosphate: step 1/6. In terms of biological role, catalyzes the NADPH-dependent rearrangement and reduction of 1-deoxy-D-xylulose-5-phosphate (DXP) to 2-C-methyl-D-erythritol 4-phosphate (MEP). This Acidithiobacillus ferrooxidans (strain ATCC 53993 / BNL-5-31) (Leptospirillum ferrooxidans (ATCC 53993)) protein is 1-deoxy-D-xylulose 5-phosphate reductoisomerase.